A 187-amino-acid chain; its full sequence is Crossover junction endodeoxyribonuclease RuvC (187 aa).

Residues Asp7, Glu67, and Asp140 contribute to the active site. The Mg(2+) site is built by Asp7, Glu67, and Asp140.

Belongs to the RuvC family. As to quaternary structure, homodimer which binds Holliday junction (HJ) DNA. The HJ becomes 2-fold symmetrical on binding to RuvC with unstacked arms; it has a different conformation from HJ DNA in complex with RuvA. In the full resolvosome a probable DNA-RuvA(4)-RuvB(12)-RuvC(2) complex forms which resolves the HJ. It depends on Mg(2+) as a cofactor.

It is found in the cytoplasm. The catalysed reaction is Endonucleolytic cleavage at a junction such as a reciprocal single-stranded crossover between two homologous DNA duplexes (Holliday junction).. Functionally, the RuvA-RuvB-RuvC complex processes Holliday junction (HJ) DNA during genetic recombination and DNA repair. Endonuclease that resolves HJ intermediates. Cleaves cruciform DNA by making single-stranded nicks across the HJ at symmetrical positions within the homologous arms, yielding a 5'-phosphate and a 3'-hydroxyl group; requires a central core of homology in the junction. The consensus cleavage sequence is 5'-(A/T)TT(C/G)-3'. Cleavage occurs on the 3'-side of the TT dinucleotide at the point of strand exchange. HJ branch migration catalyzed by RuvA-RuvB allows RuvC to scan DNA until it finds its consensus sequence, where it cleaves and resolves the cruciform DNA. This Chlorobium phaeobacteroides (strain DSM 266 / SMG 266 / 2430) protein is Crossover junction endodeoxyribonuclease RuvC.